Consider the following 581-residue polypeptide: Arginine--tRNA ligase (581 aa).

A 'HIGH' region motif is present at residues 123–133 (PNVAKEMHVGH).

This sequence belongs to the class-I aminoacyl-tRNA synthetase family. In terms of assembly, monomer.

The protein localises to the cytoplasm. The enzyme catalyses tRNA(Arg) + L-arginine + ATP = L-arginyl-tRNA(Arg) + AMP + diphosphate. The protein is Arginine--tRNA ligase of Blochmanniella pennsylvanica (strain BPEN).